The chain runs to 183 residues: Calmodulin-like protein 3 (183 aa).

4 consecutive EF-hand domains span residues Glu7–Ser42, Pro43–Asp78, Gly80–Pro115, and Leu116–Gln151. Ca(2+)-binding residues include Asp20, Asp22, Asp24, Thr26, Glu31, Asp56, Asp58, Ser60, Ser62, Glu67, Asp93, Asp95, Asn97, Glu104, Asp129, Asp131, Asp133, Gln135, and Glu140. The disordered stretch occupies residues Met154 to Leu183. 2 S-palmitoyl cysteine lipidation sites follow: Cys173 and Cys174. Cys180 carries the cysteine methyl ester modification. Cys180 is lipidated: S-farnesyl cysteine. The propeptide at Thr181 to Leu183 is removed in mature form.

The protein belongs to the calmodulin family.

The protein localises to the membrane. Functionally, potential calcium sensor. The sequence is that of Calmodulin-like protein 3 (CML3) from Oryza sativa subsp. japonica (Rice).